The following is a 68-amino-acid chain: KEGYLVDYHTGCKYTCAKLGDNDYCVRECRLRYYQSAHGYCYAFACWCTHLYEQAVVWPLPNKRCKGK.

The region spanning 1–66 (KEGYLVDYHT…VWPLPNKRCK (66 aa)) is the LCN-type CS-alpha/beta domain. Cystine bridges form between Cys12–Cys65, Cys16–Cys41, Cys25–Cys46, and Cys29–Cys48. Lys66 is modified (lysine amide).

The protein belongs to the long (4 C-C) scorpion toxin superfamily. Sodium channel inhibitor family. Beta subfamily. Expressed by the venom gland.

The protein resides in the secreted. In terms of biological role, beta toxins bind voltage-independently at site-4 of sodium channels (Nav) and shift the voltage of activation toward more negative potentials thereby affecting sodium channel activation and promoting spontaneous and repetitive firing. Inhibits sodium channels Nav1.4/SCN4A, Nav1.5/SCN5A and Nav1.6/SCN8A. Also has a weak inhibitory effect on Nav1.2/SCN2A. Is lethal to mice. The chain is Beta-toxin Cl13 from Centruroides limpidus (Mexican scorpion).